Consider the following 184-residue polypeptide: MASDAIISGMKTKMDKTIDLVKKDFGTIRTGRANPSLVEDIRVDYYGNQTPINQLGNISVPEPRMLVISPYDKGIMKDIEKAIQTSGLGLQPTNDGVVIRIVIPELTGERRKELAKVVKSKSEEKKVAIRNIRRDAMEDLKKHTEGMSQDEIKSVQDQIQKITDSYIDKISALTAEKEKEITTI.

It belongs to the RRF family.

Its subcellular location is the cytoplasm. Its function is as follows. Responsible for the release of ribosomes from messenger RNA at the termination of protein biosynthesis. May increase the efficiency of translation by recycling ribosomes from one round of translation to another. The protein is Ribosome-recycling factor of Leptospira interrogans serogroup Icterohaemorrhagiae serovar copenhageni (strain Fiocruz L1-130).